The primary structure comprises 336 residues: Anthranilate phosphoribosyltransferase (336 aa).

5-phospho-alpha-D-ribose 1-diphosphate is bound by residues Gly-82, 85 to 86 (GD), Thr-90, 92 to 95 (NIST), 110 to 118 (KHGNRSVSS), and Ser-122. Position 82 (Gly-82) interacts with anthranilate. Position 94 (Ser-94) interacts with Mg(2+). An anthranilate-binding site is contributed by Asn-113. Arg-168 is an anthranilate binding site. Mg(2+)-binding residues include Asp-227 and Glu-228.

This sequence belongs to the anthranilate phosphoribosyltransferase family. As to quaternary structure, homodimer. The cofactor is Mg(2+).

It catalyses the reaction N-(5-phospho-beta-D-ribosyl)anthranilate + diphosphate = 5-phospho-alpha-D-ribose 1-diphosphate + anthranilate. It functions in the pathway amino-acid biosynthesis; L-tryptophan biosynthesis; L-tryptophan from chorismate: step 2/5. Catalyzes the transfer of the phosphoribosyl group of 5-phosphorylribose-1-pyrophosphate (PRPP) to anthranilate to yield N-(5'-phosphoribosyl)-anthranilate (PRA). This Leptospira interrogans serogroup Icterohaemorrhagiae serovar copenhageni (strain Fiocruz L1-130) protein is Anthranilate phosphoribosyltransferase.